Consider the following 377-residue polypeptide: Homoserine O-acetyltransferase (377 aa).

Positions Asn48 to Glu347 constitute an AB hydrolase-1 domain. Residue Ser143 is the Nucleophile of the active site. A substrate-binding site is contributed by Arg213. Active-site residues include Asp311 and His341. Asp342 lines the substrate pocket.

Belongs to the AB hydrolase superfamily. MetX family. As to quaternary structure, homodimer.

Its subcellular location is the cytoplasm. It catalyses the reaction L-homoserine + acetyl-CoA = O-acetyl-L-homoserine + CoA. The protein operates within amino-acid biosynthesis; L-methionine biosynthesis via de novo pathway; O-acetyl-L-homoserine from L-homoserine: step 1/1. Its function is as follows. Transfers an acetyl group from acetyl-CoA to L-homoserine, forming acetyl-L-homoserine. This is Homoserine O-acetyltransferase from Corynebacterium efficiens (strain DSM 44549 / YS-314 / AJ 12310 / JCM 11189 / NBRC 100395).